The primary structure comprises 251 residues: Tachykinins (251 aa).

A signal peptide spans 1–21; that stretch reads MGAPRTCLIFITIQLVSLAYA. A propeptide spanning residues 22–25 is cleaved from the precursor; the sequence is QEVS. An Arginine amide modification is found at Arg36. The propeptide occupies 39–50; sequence KYFDEEGIEQFY. Lys61 bears the Lysine amide mark. A propeptide spanning residues 65–163 is cleaved from the precursor; that stretch reads SLQDILEAPE…MEPEQSNDLD (99 aa). Arg176 is subject to Arginine amide. The propeptide occupies 180–183; that stretch reads SINN. The residue at position 199 (Arg199) is an Arginine amide. Residues 203–223 constitute a propeptide that is removed on maturation; it reads DLKNSNAHEIKFLVDQNGPLP. An Arginine amide modification is found at Arg235. The propeptide occupies 239–251; that stretch reads WTDEPSLEMDMPN.

It belongs to the tachykinin family. As to expression, tachykinin-related peptide 1: Expressed in antennal lobe (AL) and gnathal ganglion (GNG) (at protein level). Expression in AL detected in all animals, in GNG in most animals (at protein level). Not expressed in corpora cardiaca (CC) and corpora allata (CA) (at protein level). Tachykinin-related peptide 2: Expressed in antennal lobe (AL) corpora cardiaca (CC) and corpora allata (CA) with expression detected in few animals (at protein level). Not expressed in gnathal ganglion (GNG) (at protein level). Tachykinin-related peptide 4: Expressed in corpora cardiaca (CC), corpora allata (CA), antennal lobe (AL) and gnathal ganglion (GNG) (at protein level). Expression in AL and GNG detected in most animals, in CC and CA detected in few animals (at protein level). Tachykinin-related peptide 5: Expressed in corpora cardiaca (CC), corpora allata (CA), antennal lobe (AL) and gnathal ganglion (GNG) (at protein level). Expression in CC and CA detected in some animals, in AL and GNG in few animals (at protein level). Tachykinin-related peptide 6: Expressed in antennal lobe (AL) and gnathal ganglion (GNG) (at protein level). Expression in AL detected in all animals, in GNG in some animals (at protein level). Not expressed in corpora cardiaca (CC) and corpora allata (CA) (at protein level).

Its subcellular location is the secreted. Its function is as follows. Tachykinins are active peptides which excite neurons, evoke behavioral responses, are potent vasodilators and secretagogues, and contract (directly or indirectly) many smooth muscles. The protein is Tachykinins of Agrotis ipsilon (Black cutworm moth).